A 139-amino-acid chain; its full sequence is MPTINQLVKVNRKAKTWKTKAPALNRGINTLIKKVTKIASPQKRGVCTRVATMTPKKPNSALRKYARVRLTNGMEVNAYIPGEGHNLQEHSVVLIRGGRVKDLPGVRYHVIRGTLDTQGVAKRSQGRSLYGVKRPKVKK.

Residue aspartate 102 is modified to 3-methylthioaspartic acid.

This sequence belongs to the universal ribosomal protein uS12 family. As to quaternary structure, part of the 30S ribosomal subunit. Contacts proteins S8 and S17. May interact with IF1 in the 30S initiation complex.

Functionally, with S4 and S5 plays an important role in translational accuracy. Its function is as follows. Interacts with and stabilizes bases of the 16S rRNA that are involved in tRNA selection in the A site and with the mRNA backbone. Located at the interface of the 30S and 50S subunits, it traverses the body of the 30S subunit contacting proteins on the other side and probably holding the rRNA structure together. The combined cluster of proteins S8, S12 and S17 appears to hold together the shoulder and platform of the 30S subunit. This Mycoplasma capricolum subsp. capricolum (strain California kid / ATCC 27343 / NCTC 10154) protein is Small ribosomal subunit protein uS12.